A 265-amino-acid chain; its full sequence is Putative hydro-lyase PA2116 (265 aa).

This sequence belongs to the D-glutamate cyclase family.

This Pseudomonas aeruginosa (strain ATCC 15692 / DSM 22644 / CIP 104116 / JCM 14847 / LMG 12228 / 1C / PRS 101 / PAO1) protein is Putative hydro-lyase PA2116.